A 115-amino-acid polypeptide reads, in one-letter code: NADH-ubiquinone oxidoreductase chain 3 (115 aa).

Helical transmembrane passes span 4 to 24, 55 to 75, and 87 to 107; these read FMAL…AFWL, FFLV…LLPL, and MMLT…YEWV.

This sequence belongs to the complex I subunit 3 family. Core subunit of respiratory chain NADH dehydrogenase (Complex I) which is composed of 45 different subunits. Interacts with TMEM186. Interacts with TMEM242.

It is found in the mitochondrion inner membrane. It carries out the reaction a ubiquinone + NADH + 5 H(+)(in) = a ubiquinol + NAD(+) + 4 H(+)(out). In terms of biological role, core subunit of the mitochondrial membrane respiratory chain NADH dehydrogenase (Complex I) which catalyzes electron transfer from NADH through the respiratory chain, using ubiquinone as an electron acceptor. Essential for the catalytic activity of complex I. This chain is NADH-ubiquinone oxidoreductase chain 3, found in Osgoodomys banderanus (Michoacan deer mouse).